Reading from the N-terminus, the 132-residue chain is D-beta-hydroxybutyrate dehydrogenase, mitochondrial (132 aa).

An NAD(+)-binding site is contributed by 3-27 (LVTGCDSGFGFSLAKHLHSKGFLVF). An N6-acetyllysine modification is found at lysine 17. Serine 59 contributes to the substrate binding site. The active-site Proton acceptor is tyrosine 66. Lysine 70 is modified (N6-acetyllysine). O-linked (GlcNAc) serine glycosylation occurs at serine 77. Position 104 is a phosphoserine (serine 104).

The protein belongs to the short-chain dehydrogenases/reductases (SDR) family. As to quaternary structure, homotetramer.

It localises to the mitochondrion inner membrane. The protein localises to the mitochondrion matrix. The enzyme catalyses (R)-3-hydroxybutanoate + NAD(+) = acetoacetate + NADH + H(+). Its activity is regulated as follows. Requires phosphatidylcholine as an allosteric activator for enzymatic activity. The protein is D-beta-hydroxybutyrate dehydrogenase, mitochondrial of Mesocricetus auratus (Golden hamster).